The following is a 699-amino-acid chain: Elongation factor G (699 aa).

The tr-type G domain occupies N10–T292. Residues A19–T26, D90–H94, and N144–D147 contribute to the GTP site. Positions T292–S312 are disordered.

It belongs to the TRAFAC class translation factor GTPase superfamily. Classic translation factor GTPase family. EF-G/EF-2 subfamily.

It localises to the cytoplasm. In terms of biological role, catalyzes the GTP-dependent ribosomal translocation step during translation elongation. During this step, the ribosome changes from the pre-translocational (PRE) to the post-translocational (POST) state as the newly formed A-site-bound peptidyl-tRNA and P-site-bound deacylated tRNA move to the P and E sites, respectively. Catalyzes the coordinated movement of the two tRNA molecules, the mRNA and conformational changes in the ribosome. In Coxiella burnetii (strain CbuG_Q212) (Coxiella burnetii (strain Q212)), this protein is Elongation factor G.